A 180-amino-acid chain; its full sequence is LDLR chaperone boca (180 aa).

Positions Met-1 to Ala-18 are cleaved as a signal peptide. Residues Gln-48 to Leu-61 are compositionally biased toward acidic residues. Positions Gln-48–Ser-78 are disordered. A structured core region spans residues Thr-93–Glu-166. A Prevents secretion from ER motif is present at residues Lys-177–Leu-180.

The protein belongs to the MESD family. In terms of assembly, monomer. Interacts with Arrow and Yolkless.

The protein resides in the endoplasmic reticulum. Its function is as follows. Chaperone specifically assisting the folding of beta-propeller/EGF modules within the family of low-density lipoprotein receptors (LDLRs). Acts as a modulator of the Wg pathway, since some LDLRs are coreceptors for the canonical Wnt pathway. This Drosophila melanogaster (Fruit fly) protein is LDLR chaperone boca (boca).